A 912-amino-acid chain; its full sequence is Serine/threonine-protein kinase D1 (912 aa).

Y95 is modified (phosphotyrosine). The Phorbol-ester/DAG-type 1 zinc-finger motif lies at P146–C196. A phosphoserine mark is found at S205, S208, S219, and S223. A Phorbol-ester/DAG-type 2 zinc finger spans residues P270–C320. The residue at position 345 (S345) is a Phosphoserine. A disordered region spans residues N377 to N402. A phosphoserine; by MAPK13 mark is found at S397 and S401. The 120-residue stretch at T422 to M541 folds into the PH domain. Residue Y432 is modified to Phosphotyrosine. Residue S448 is modified to Phosphoserine. At Y463 the chain carries Phosphotyrosine; by ABL. Position 473 is a phosphoserine (S473). Y502 is subject to Phosphotyrosine. S548 is subject to Phosphoserine. Residues I583 to L839 enclose the Protein kinase domain. Residues L589 to V597 and K612 each bind ATP. The active-site Proton acceptor is D706. At S738 the chain carries Phosphoserine; by PKC/PRKCD. S742 is subject to Phosphoserine; by autocatalysis and PKC/PRKCD. Residue Y749 is modified to Phosphotyrosine. S910 bears the Phosphoserine; by autocatalysis mark.

Belongs to the protein kinase superfamily. CAMK Ser/Thr protein kinase family. PKD subfamily. In terms of assembly, interacts (via N-terminus) with ADAP1/CENTA1. Interacts with MAPK13. Interacts with DAPK1 in an oxidative stress-regulated manner. Interacts with USP28; the interaction induces phosphorylation of USP28 and activated KRAS-mediated stabilization of ZNF304. Interacts with AKAP13 (via C-terminal domain). It depends on Mg(2+) as a cofactor. Post-translationally, phosphorylated at Ser-397 and Ser-401 by MAPK13 during regulation of insulin secretion in pancreatic beta cells. Phosphorylated by DAPK1. Phosphorylated at Tyr-95 and by ABL at Tyr-463, which primes the kinase in response to oxidative stress, and promotes a second step activating phosphorylation at Ser-738/Ser-742 by PKRD. Phosphorylated on Ser-910 upon S.enterica infection in macrophages.

The protein resides in the cytoplasm. It localises to the cell membrane. Its subcellular location is the golgi apparatus. It is found in the trans-Golgi network. The enzyme catalyses L-seryl-[protein] + ATP = O-phospho-L-seryl-[protein] + ADP + H(+). It carries out the reaction L-threonyl-[protein] + ATP = O-phospho-L-threonyl-[protein] + ADP + H(+). Its activity is regulated as follows. Activated by DAG and phorbol esters. Phorbol-ester/DAG-type domain 1 binds DAG with high affinity and appears to play the dominant role in mediating translocation to the cell membrane and trans-Golgi network. Phorbol-ester/DAG-type domain 2 binds phorbol ester with higher affinity. Autophosphorylation of Ser-742 and phosphorylation of Ser-738 by PKC relieves auto-inhibition by the PH domain. Phosphorylation on Tyr-463 by the SRC-ABL1 pathway in response to oxidative stress, is also required for activation. Activated by DAPK1 under oxidative stress. Its function is as follows. Serine/threonine-protein kinase that converts transient diacylglycerol (DAG) signals into prolonged physiological effects downstream of PKC, and is involved in the regulation of MAPK8/JNK1 and Ras signaling, Golgi membrane integrity and trafficking, cell survival through NF-kappa-B activation, cell migration, cell differentiation by mediating HDAC7 nuclear export, cell proliferation via MAPK1/3 (ERK1/2) signaling, and plays a role in cardiac hypertrophy, VEGFA-induced angiogenesis, genotoxic-induced apoptosis and flagellin-stimulated inflammatory response. Phosphorylates the epidermal growth factor receptor (EGFR) on dual threonine residues, which leads to the suppression of epidermal growth factor (EGF)-induced MAPK8/JNK1 activation and subsequent JUN phosphorylation. Phosphorylates RIN1, inducing RIN1 binding to 14-3-3 proteins YWHAB, YWHAE and YWHAZ and increased competition with RAF1 for binding to GTP-bound form of Ras proteins (NRAS, HRAS and KRAS). Acts downstream of the heterotrimeric G-protein beta/gamma-subunit complex to maintain the structural integrity of the Golgi membranes, and is required for protein transport along the secretory pathway. In the trans-Golgi network (TGN), regulates the fission of transport vesicles that are on their way to the plasma membrane. May act by activating the lipid kinase phosphatidylinositol 4-kinase beta (PI4KB) at the TGN for the local synthesis of phosphorylated inositol lipids, which induces a sequential production of DAG, phosphatidic acid (PA) and lyso-PA (LPA) that are necessary for membrane fission and generation of specific transport carriers to the cell surface. Under oxidative stress, is phosphorylated at Tyr-463 via SRC-ABL1 and contributes to cell survival by activating IKK complex and subsequent nuclear translocation and activation of NFKB1. Involved in cell migration by regulating integrin alpha-5/beta-3 recycling and promoting its recruitment in newly forming focal adhesion. In osteoblast differentiation, mediates the bone morphogenetic protein 2 (BMP2)-induced nuclear export of HDAC7, which results in the inhibition of HDAC7 transcriptional repression of RUNX2. In neurons, plays an important role in neuronal polarity by regulating the biogenesis of TGN-derived dendritic vesicles, and is involved in the maintenance of dendritic arborization and Golgi structure in hippocampal cells. May potentiate mitogenesis induced by the neuropeptide bombesin or vasopressin by mediating an increase in the duration of MAPK1/3 (ERK1/2) signaling, which leads to accumulation of immediate-early gene products including FOS that stimulate cell cycle progression. Plays an important role in the proliferative response induced by low calcium in keratinocytes, through sustained activation of MAPK1/3 (ERK1/2) pathway. Downstream of novel PKC signaling, plays a role in cardiac hypertrophy by phosphorylating HDAC5, which in turn triggers XPO1/CRM1-dependent nuclear export of HDAC5, MEF2A transcriptional activation and induction of downstream target genes that promote myocyte hypertrophy and pathological cardiac remodeling. Mediates cardiac troponin I (TNNI3) phosphorylation at the PKA sites, which results in reduced myofilament calcium sensitivity, and accelerated crossbridge cycling kinetics. The PRKD1-HDAC5 pathway is also involved in angiogenesis by mediating VEGFA-induced specific subset of gene expression, cell migration, and tube formation. In response to VEGFA, is necessary and required for HDAC7 phosphorylation which induces HDAC7 nuclear export and endothelial cell proliferation and migration. During apoptosis induced by cytarabine and other genotoxic agents, PRKD1 is cleaved by caspase-3 at Asp-378, resulting in activation of its kinase function and increased sensitivity of cells to the cytotoxic effects of genotoxic agents. In epithelial cells, is required for transducing flagellin-stimulated inflammatory responses by binding and phosphorylating TLR5, which contributes to MAPK14/p38 activation and production of inflammatory cytokines. Acts as an activator of NLRP3 inflammasome assembly by mediating phosphorylation of NLRP3. May play a role in inflammatory response by mediating activation of NF-kappa-B. May be involved in pain transmission by directly modulating TRPV1 receptor. Plays a role in activated KRAS-mediated stabilization of ZNF304 in colorectal cancer (CRC) cells. Regulates nuclear translocation of transcription factor TFEB in macrophages upon live S.enterica infection. In Homo sapiens (Human), this protein is Serine/threonine-protein kinase D1 (PRKD1).